The chain runs to 486 residues: N-succinylglutamate 5-semialdehyde dehydrogenase (486 aa).

220–225 (GSSRTG) contacts NAD(+). Active-site residues include E243 and C277.

Belongs to the aldehyde dehydrogenase family. AstD subfamily.

The catalysed reaction is N-succinyl-L-glutamate 5-semialdehyde + NAD(+) + H2O = N-succinyl-L-glutamate + NADH + 2 H(+). Its pathway is amino-acid degradation; L-arginine degradation via AST pathway; L-glutamate and succinate from L-arginine: step 4/5. In terms of biological role, catalyzes the NAD-dependent reduction of succinylglutamate semialdehyde into succinylglutamate. The sequence is that of N-succinylglutamate 5-semialdehyde dehydrogenase from Shewanella sediminis (strain HAW-EB3).